The sequence spans 119 residues: Neuropeptide B (119 aa).

Residues 1–21 form the signal peptide; sequence MVRCRTLVAAALALLLTPALA. Positions 53-119 are excised as a propeptide; it reads SESPALRVGT…SLHKAECQSA (67 aa).

Belongs to the neuropeptide B/W family. Detected in a variety of tissues. High levels are found in the lymphoid organs, central nervous system, mammary gland and uterus.

It is found in the secreted. May be involved in the regulation of feeding, neuroendocrine system, memory and learning. May be involved in the afferent pain pathway. This chain is Neuropeptide B (Npb), found in Rattus norvegicus (Rat).